The primary structure comprises 547 residues: MAAKDVKFGNDARVKMLRGVNVLADAVKVTLGPKGRNVVLDKSFGAPVITKDGVSVAREIELEDKFENMGAQMVKEVASKANDSAGDGTTTATVLAQSIVNEGLKAVAAGMNPMDLKRGIDKAVVAAVEELKKLSVPCSDPKAIAQVGTISANSDETVGKLIAQAMDKVGKEGVITVEEGSGLQDELDVVEGMQFDRGYLSPYFVNKPESGTVELEHPFILLADKKISNIREMLPILESVAKSGKPLLIIAEDVEGEALATLVVNNMRGIVKVTAVKAPGFGDRRKAMLQDIAILTSGTVISEEIGLELEKATLEDMGQAKRVLITKDATTIIDGVGNKSSIDSRVAQINQQRDEATSDYDREKLQERVAKLAGGVAVIKVGAATEVEMKEKKARVEDALHATRAAVEEGVVAGGGVALIRVANAIRNLCGDNEDQNVGIKVARRAMEAPLRQIMANAGEEPSVIANNVRSGEGNTGYNAATEKYGNMIELGILDPTKVTRSALQYAASIAGLMITTECMVTELPKEDKPDLGGGNPGGAGGMGGMM.

ATP-binding positions include 30–33 (TLGP), Lys51, 87–91 (DGTTT), Gly415, 479–481 (NAA), and Asp495. The interval 525–547 (PKEDKPDLGGGNPGGAGGMGGMM) is disordered. Over residues 532–547 (LGGGNPGGAGGMGGMM) the composition is skewed to gly residues.

It belongs to the chaperonin (HSP60) family. In terms of assembly, forms a cylinder of 14 subunits composed of two heptameric rings stacked back-to-back. Interacts with the co-chaperonin GroES.

The protein resides in the cytoplasm. The catalysed reaction is ATP + H2O + a folded polypeptide = ADP + phosphate + an unfolded polypeptide.. Together with its co-chaperonin GroES, plays an essential role in assisting protein folding. The GroEL-GroES system forms a nano-cage that allows encapsulation of the non-native substrate proteins and provides a physical environment optimized to promote and accelerate protein folding. This chain is Chaperonin GroEL, found in Blochmanniella floridana.